We begin with the raw amino-acid sequence, 325 residues long: UPF0285 protein Mbar_A0208 (325 aa).

The protein belongs to the UPF0285 family.

The polypeptide is UPF0285 protein Mbar_A0208 (Methanosarcina barkeri (strain Fusaro / DSM 804)).